Here is a 291-residue protein sequence, read N- to C-terminus: MTTLAIDIGGTKLAAALIDKNLRISQRRELPTPASKTPDALREALKALVEPLRAEARQVAIASTGIIQEGMLLALNPHNLGGLLHFPLVQTLETIAGLPTLAVNDAQAAAWAEYHALPDDIRDMVFITVSTGVGGGVVCDGKLLTGKGGLAGHLGHTLADPHGPVCGCGRVGCVEAIASGRGMAAAARDDLAGCDAKTLFIRAGEGHQQARHLVSQSAQVIARMIADVKATTDCQCVVIGGSVGLAEGYLEQVRAFLMQEPAPYHVALSAARYRHDAGLLGAALLAQGDTL.

Residues Ala5–Lys12 and Gly132–Cys139 each bind ATP. Residues His156, Cys166, Cys168, and Cys173 each coordinate Zn(2+).

Belongs to the ROK (NagC/XylR) family. NanK subfamily. Homodimer.

It carries out the reaction an N-acyl-D-mannosamine + ATP = an N-acyl-D-mannosamine 6-phosphate + ADP + H(+). It functions in the pathway amino-sugar metabolism; N-acetylneuraminate degradation; D-fructose 6-phosphate from N-acetylneuraminate: step 2/5. Its function is as follows. Catalyzes the phosphorylation of N-acetylmannosamine (ManNAc) to ManNAc-6-P. The polypeptide is N-acetylmannosamine kinase (Salmonella dublin (strain CT_02021853)).